The sequence spans 228 residues: Casparian strip membrane protein 2 (228 aa).

Topologically, residues 1 to 65 (MSTSDAAATV…FRRADRGSRC (65 aa)) are cytoplasmic. Residues 66-86 (VALLDLVLRVAAFGPALAAAI) traverse the membrane as a helical segment. The Extracellular segment spans residues 87 to 113 (ATGTSDETLSVFTQFFQFHARFDDFPA). A helical membrane pass occupies residues 114–134 (LLFFMVANAIAAGYLVLSLPF). Over 135 to 149 (SAVVVLRPQAIGLRH) the chain is Cytoplasmic. A helical membrane pass occupies residues 150–170 (LLLICDLIIAALLTAAAAAAA). Residues 171–201 (AIVDLAHSGNQRANWVPICMQFHGFCQRTSG) are Extracellular-facing. The chain crosses the membrane as a helical span at residues 202-222 (AVVASFLAVLVLLFLVILAAF). Residues 223–228 (TIRKRC) are Cytoplasmic-facing.

Belongs to the Casparian strip membrane proteins (CASP) family. As to quaternary structure, homodimer and heterodimers.

Its subcellular location is the cell membrane. Regulates membrane-cell wall junctions and localized cell wall deposition. Required for establishment of the Casparian strip membrane domain (CSD) and the subsequent formation of Casparian strips, a cell wall modification of the root endodermis that determines an apoplastic barrier between the intraorganismal apoplasm and the extraorganismal apoplasm and prevents lateral diffusion. This is Casparian strip membrane protein 2 from Zea mays (Maize).